A 641-amino-acid polypeptide reads, in one-letter code: Phosphomethylpyrimidine synthase (641 aa).

Substrate contacts are provided by residues Asn221, Met250, Tyr279, His315, 335–337 (SRG), 376–379 (DGLR), and Glu415. Residue His419 coordinates Zn(2+). Tyr442 contributes to the substrate binding site. His483 provides a ligand contact to Zn(2+). Residues Cys563, Cys566, and Cys571 each contribute to the [4Fe-4S] cluster site.

Belongs to the ThiC family. As to quaternary structure, homodimer. [4Fe-4S] cluster is required as a cofactor.

The enzyme catalyses 5-amino-1-(5-phospho-beta-D-ribosyl)imidazole + S-adenosyl-L-methionine = 4-amino-2-methyl-5-(phosphooxymethyl)pyrimidine + CO + 5'-deoxyadenosine + formate + L-methionine + 3 H(+). It functions in the pathway cofactor biosynthesis; thiamine diphosphate biosynthesis. In terms of biological role, catalyzes the synthesis of the hydroxymethylpyrimidine phosphate (HMP-P) moiety of thiamine from aminoimidazole ribotide (AIR) in a radical S-adenosyl-L-methionine (SAM)-dependent reaction. This chain is Phosphomethylpyrimidine synthase, found in Rhodopseudomonas palustris (strain TIE-1).